The following is a 66-amino-acid chain: MTVVRGVSALLRVFCIAMLAAGLGVALQPAAVTGAARAAGYESLMVPSAAMGRDIPVAFLAGGPHA.

The signal sequence occupies residues 1–38; that stretch reads MTVVRGVSALLRVFCIAMLAAGLGVALQPAAVTGAARA.

This sequence belongs to the mycobacterial A85 antigen family. As to quaternary structure, homodimer.

The protein localises to the secreted. May have a role in host tissue attachment, whereby ligands may include the serum protein fibronectin and small sugars. This Mycobacterium avium protein is MPT51 antigen (mpt51).